The sequence spans 343 residues: MSEESDSLRTSPSVASLSENELPLPPPDPPGYVCSLTEDLVTKAREELQEKPEWRLRDVQALRDMVRKEYPYLSTSLDDAFLLRFLRARKFDYDRALQLLVNYHGCRRSWPEVFSNLRPSALKDVLNSGFLTVLPHTDPRGCHVLCIRPDRWIPSNYPITENIRAVYLTLEKLIQSEETQVNGIVILADYKGVSLSKASHFGPFIAKKVIGILQDGFPIRIKAVHIVNEPRIFKGIFAIIKPFLKEKIANRFFLHGSDLNSLHTNLPRNILPKEYGGTAGELDTASWNAVLLASEEDFVKEFCQPMPACDNLLGQPLLPEGLISDAQCDDSMRAMKSQLYSCY.

The interval 1-29 (MSEESDSLRTSPSVASLSENELPLPPPDP) is disordered. Residues 8 to 19 (LRTSPSVASLSE) show a composition bias toward polar residues. Residues 118 to 283 (RPSALKDVLN…EYGGTAGELD (166 aa)) enclose the CRAL-TRIO domain.

May act as a protein that binds a hydrophobic ligand. This chain is Alpha-tocopherol transfer protein-like (Ttpal), found in Mus musculus (Mouse).